The following is a 282-amino-acid chain: ATP phosphoribosyltransferase (282 aa).

This sequence belongs to the ATP phosphoribosyltransferase family. Long subfamily. The cofactor is Mg(2+).

The protein localises to the cytoplasm. It catalyses the reaction 1-(5-phospho-beta-D-ribosyl)-ATP + diphosphate = 5-phospho-alpha-D-ribose 1-diphosphate + ATP. It functions in the pathway amino-acid biosynthesis; L-histidine biosynthesis; L-histidine from 5-phospho-alpha-D-ribose 1-diphosphate: step 1/9. With respect to regulation, feedback inhibited by histidine. In terms of biological role, catalyzes the condensation of ATP and 5-phosphoribose 1-diphosphate to form N'-(5'-phosphoribosyl)-ATP (PR-ATP). Has a crucial role in the pathway because the rate of histidine biosynthesis seems to be controlled primarily by regulation of HisG enzymatic activity. The protein is ATP phosphoribosyltransferase of Pyrobaculum islandicum (strain DSM 4184 / JCM 9189 / GEO3).